Reading from the N-terminus, the 523-residue chain is 2-isopropylmalate synthase (523 aa).

The Pyruvate carboxyltransferase domain maps to 5-267 (VIIFDTTLRD…ETGINAKEIH (263 aa)). Positions 14, 202, 204, and 238 each coordinate Mn(2+). Residues 392-523 (KLAQLVVHSD…QKDRSELGGV (132 aa)) are regulatory domain.

Belongs to the alpha-IPM synthase/homocitrate synthase family. LeuA type 1 subfamily. In terms of assembly, homodimer. Requires Mn(2+) as cofactor.

It is found in the cytoplasm. The enzyme catalyses 3-methyl-2-oxobutanoate + acetyl-CoA + H2O = (2S)-2-isopropylmalate + CoA + H(+). It participates in amino-acid biosynthesis; L-leucine biosynthesis; L-leucine from 3-methyl-2-oxobutanoate: step 1/4. In terms of biological role, catalyzes the condensation of the acetyl group of acetyl-CoA with 3-methyl-2-oxobutanoate (2-ketoisovalerate) to form 3-carboxy-3-hydroxy-4-methylpentanoate (2-isopropylmalate). In Shewanella sediminis (strain HAW-EB3), this protein is 2-isopropylmalate synthase.